We begin with the raw amino-acid sequence, 161 residues long: MINLTIVLAVEEVAEKGGLFDINATLPLMAIQFLLLAFVLDKIFYKPLGKAIDSRADYIRENQVKAKERLAKAKQLAEQYEQEFAQTRQKSQVVIVAAQAEAEKIAATKVAVAQKEAQVKREQAAQEIEKQKEVALEQLEEQVDSLSRQILEKLLGPELVR.

Residues 26–45 (LPLMAIQFLLLAFVLDKIFY) traverse the membrane as a helical segment.

Belongs to the ATPase B chain family. F-type ATPases have 2 components, F(1) - the catalytic core - and F(0) - the membrane proton channel. F(1) has five subunits: alpha(3), beta(3), gamma(1), delta(1), epsilon(1). F(0) has four main subunits: a(1), b(1), b'(1) and c(10-14). The alpha and beta chains form an alternating ring which encloses part of the gamma chain. F(1) is attached to F(0) by a central stalk formed by the gamma and epsilon chains, while a peripheral stalk is formed by the delta, b and b' chains.

It localises to the cellular thylakoid membrane. Functionally, f(1)F(0) ATP synthase produces ATP from ADP in the presence of a proton or sodium gradient. F-type ATPases consist of two structural domains, F(1) containing the extramembraneous catalytic core and F(0) containing the membrane proton channel, linked together by a central stalk and a peripheral stalk. During catalysis, ATP synthesis in the catalytic domain of F(1) is coupled via a rotary mechanism of the central stalk subunits to proton translocation. Component of the F(0) channel, it forms part of the peripheral stalk, linking F(1) to F(0). The b'-subunit is a diverged and duplicated form of b found in plants and photosynthetic bacteria. In Trichodesmium erythraeum (strain IMS101), this protein is ATP synthase subunit b'.